We begin with the raw amino-acid sequence, 363 residues long: 3-isopropylmalate dehydrogenase (363 aa).

Position 79 to 92 (79 to 92 (GPKWEHLPPNDQPE)) interacts with NAD(+). Residues arginine 100, arginine 110, arginine 139, and aspartate 228 each coordinate substrate. Mg(2+)-binding residues include aspartate 228, aspartate 252, and aspartate 256. 286 to 298 (GSAPDIAGKNIAN) serves as a coordination point for NAD(+).

This sequence belongs to the isocitrate and isopropylmalate dehydrogenases family. LeuB type 1 subfamily. In terms of assembly, homodimer. It depends on Mg(2+) as a cofactor. Mn(2+) is required as a cofactor.

The protein localises to the cytoplasm. It catalyses the reaction (2R,3S)-3-isopropylmalate + NAD(+) = 4-methyl-2-oxopentanoate + CO2 + NADH. It functions in the pathway amino-acid biosynthesis; L-leucine biosynthesis; L-leucine from 3-methyl-2-oxobutanoate: step 3/4. Catalyzes the oxidation of 3-carboxy-2-hydroxy-4-methylpentanoate (3-isopropylmalate) to 3-carboxy-4-methyl-2-oxopentanoate. The product decarboxylates to 4-methyl-2 oxopentanoate. The sequence is that of 3-isopropylmalate dehydrogenase from Vibrio parahaemolyticus serotype O3:K6 (strain RIMD 2210633).